Here is a 419-residue protein sequence, read N- to C-terminus: Phospho-N-acetylmuramoyl-pentapeptide-transferase (419 aa).

The next 10 helical transmembrane spans lie at 22-42 (YVSF…TAIG), 72-92 (TPTM…LLCA), 94-114 (LNNI…ALGF), 135-155 (IVGQ…SPDV), 210-230 (AAWL…SNGA), 238-258 (GLAA…AYMS), 266-286 (FLNI…AAFI), 303-323 (FMGD…AIII), 327-347 (LLIP…MLQV), and 396-416 (KIVV…IVTL).

This sequence belongs to the glycosyltransferase 4 family. MraY subfamily. Requires Mg(2+) as cofactor.

It localises to the cell inner membrane. It carries out the reaction UDP-N-acetyl-alpha-D-muramoyl-L-alanyl-gamma-D-glutamyl-meso-2,6-diaminopimeloyl-D-alanyl-D-alanine + di-trans,octa-cis-undecaprenyl phosphate = di-trans,octa-cis-undecaprenyl diphospho-N-acetyl-alpha-D-muramoyl-L-alanyl-D-glutamyl-meso-2,6-diaminopimeloyl-D-alanyl-D-alanine + UMP. The protein operates within cell wall biogenesis; peptidoglycan biosynthesis. Functionally, catalyzes the initial step of the lipid cycle reactions in the biosynthesis of the cell wall peptidoglycan: transfers peptidoglycan precursor phospho-MurNAc-pentapeptide from UDP-MurNAc-pentapeptide onto the lipid carrier undecaprenyl phosphate, yielding undecaprenyl-pyrophosphoryl-MurNAc-pentapeptide, known as lipid I. This is Phospho-N-acetylmuramoyl-pentapeptide-transferase from Parabacteroides distasonis (strain ATCC 8503 / DSM 20701 / CIP 104284 / JCM 5825 / NCTC 11152).